The chain runs to 257 residues: Aspartate/glutamate leucyltransferase (257 aa).

The protein belongs to the R-transferase family. Bpt subfamily.

Its subcellular location is the cytoplasm. The enzyme catalyses N-terminal L-glutamyl-[protein] + L-leucyl-tRNA(Leu) = N-terminal L-leucyl-L-glutamyl-[protein] + tRNA(Leu) + H(+). The catalysed reaction is N-terminal L-aspartyl-[protein] + L-leucyl-tRNA(Leu) = N-terminal L-leucyl-L-aspartyl-[protein] + tRNA(Leu) + H(+). Functionally, functions in the N-end rule pathway of protein degradation where it conjugates Leu from its aminoacyl-tRNA to the N-termini of proteins containing an N-terminal aspartate or glutamate. The polypeptide is Aspartate/glutamate leucyltransferase (Nitrobacter hamburgensis (strain DSM 10229 / NCIMB 13809 / X14)).